Here is a 353-residue protein sequence, read N- to C-terminus: Purine nucleoside phosphorylase (353 aa).

Residues 1-16 (MSKFSYLQNGKASTNG) are compositionally biased toward polar residues. Residues 1 to 42 (MSKFSYLQNGKASTNGVPHANGHHQQHQNGHSNGVARNGGTA) form a disordered region. Phosphate-binding positions include Ser98, His129, 149–151 (RFH), and Ala181. Glu266 contributes to the a purine D-ribonucleoside binding site. A phosphate-binding site is contributed by Ser285. Asn308 is a binding site for a purine D-ribonucleoside.

The protein belongs to the PNP/MTAP phosphorylase family. As to quaternary structure, homotrimer.

It catalyses the reaction inosine + phosphate = alpha-D-ribose 1-phosphate + hypoxanthine. The enzyme catalyses guanosine + phosphate = alpha-D-ribose 1-phosphate + guanine. It carries out the reaction 2'-deoxyguanosine + phosphate = 2-deoxy-alpha-D-ribose 1-phosphate + guanine. The catalysed reaction is 2'-deoxyinosine + phosphate = 2-deoxy-alpha-D-ribose 1-phosphate + hypoxanthine. Its pathway is purine metabolism; purine nucleoside salvage. With respect to regulation, inhibited by 5'-deaza-1'-aza-2c-deoxy-1'-(9-methylene) immucillin-H (DADMe-ImmH). In terms of biological role, as part of the purine salvage pathway, catalyzes the phosphorolytic breakdown of the N-glycosidic bond in the beta-(deoxy)ribonucleoside molecules, with the formation of the corresponding free purine bases and pentose-1-phosphate. Preferentially acts on 2'-deoxyinosine and inosine, and to a lesser extent on 2'-deoxyguanosine and guanosine. Has no activity towards adenosine or 2'-deoxyadenosine. This is Purine nucleoside phosphorylase from Anopheles gambiae (African malaria mosquito).